A 235-amino-acid polypeptide reads, in one-letter code: Ribosomal RNA small subunit methyltransferase G (235 aa).

S-adenosyl-L-methionine-binding positions include Gly74, Phe79, 97–99 (EAT), 125–126 (AE), and Arg144.

It belongs to the methyltransferase superfamily. RNA methyltransferase RsmG family.

The protein localises to the cytoplasm. Functionally, specifically methylates the N7 position of a guanine in 16S rRNA. This Dehalococcoides mccartyi (strain CBDB1) protein is Ribosomal RNA small subunit methyltransferase G.